The sequence spans 390 residues: Peroxisomal sarcosine oxidase (390 aa).

9-39 provides a ligand contact to FAD; sequence DAIVIGAGIQGCFTAYHLAKHSKSVLLLEQF. An N6-acetyllysine mark is found at K126 and K287. Residue C319 is modified to S-8alpha-FAD cysteine. Residues 388–390 carry the Microbody targeting signal motif; the sequence is AHL.

Belongs to the MSOX/MTOX family. It depends on FAD as a cofactor. In terms of tissue distribution, kidney and liver.

It is found in the peroxisome. The enzyme catalyses sarcosine + O2 + H2O = formaldehyde + glycine + H2O2. It carries out the reaction L-pipecolate + O2 = L-1-piperideine-6-carboxylate + H2O2 + H(+). Metabolizes sarcosine, L-pipecolic acid and L-proline. In Mus musculus (Mouse), this protein is Peroxisomal sarcosine oxidase (Pipox).